The chain runs to 215 residues: Chaperone protein TorD (215 aa).

It belongs to the TorD/DmsD family. TorD subfamily.

The protein localises to the cytoplasm. Functionally, involved in the biogenesis of TorA. Acts on TorA before the insertion of the molybdenum cofactor and, as a result, probably favors a conformation of the apoenzyme that is competent for acquiring the cofactor. This is Chaperone protein TorD from Vibrio vulnificus (strain CMCP6).